The following is a 157-amino-acid chain: Phosphopantetheine adenylyltransferase (157 aa).

Threonine 10 serves as a coordination point for substrate. ATP-binding positions include 10-11 and histidine 18; that span reads TF. Substrate contacts are provided by lysine 42, leucine 74, and arginine 88. Residues 89-91, glutamate 99, and 124-130 contribute to the ATP site; these read GLR and NAFISSS.

It belongs to the bacterial CoaD family. In terms of assembly, homohexamer. The cofactor is Mg(2+).

It is found in the cytoplasm. It catalyses the reaction (R)-4'-phosphopantetheine + ATP + H(+) = 3'-dephospho-CoA + diphosphate. It functions in the pathway cofactor biosynthesis; coenzyme A biosynthesis; CoA from (R)-pantothenate: step 4/5. With respect to regulation, tightly binds to CoA, which is presumably a feedback inhibitor. Potently inhibited by D-amethopterin, which simultaneously occupies the 4'-phosphopantetheine- and ATP-binding sites; following treatment with D-amethopterin, H.pylori exhibits morphological characteristics associated with cell death, showing that D-amethopterin displays antimicrobial activity. Functionally, reversibly transfers an adenylyl group from ATP to 4'-phosphopantetheine, yielding dephospho-CoA (dPCoA) and pyrophosphate. This Helicobacter pylori (strain ATCC 700392 / 26695) (Campylobacter pylori) protein is Phosphopantetheine adenylyltransferase.